The chain runs to 328 residues: Cytochrome c biogenesis protein CcsA (328 aa).

Transmembrane regions (helical) follow at residues 13–33, 46–66, 73–93, 101–121, 146–166, 234–254, 263–283, and 295–315; these read ISFS…LVNL, GIII…IFSG, LYES…ISFF, LNAI…SGLL, MVLG…LLVI, IISL…VWAN, WDPK…YLHI, and AIVA…VNLL.

This sequence belongs to the CcmF/CycK/Ccl1/NrfE/CcsA family. In terms of assembly, may interact with Ccs1.

It localises to the plastid. The protein resides in the chloroplast thylakoid membrane. Its function is as follows. Required during biogenesis of c-type cytochromes (cytochrome c6 and cytochrome f) at the step of heme attachment. This Aethionema grandiflorum (Persian stone-cress) protein is Cytochrome c biogenesis protein CcsA.